A 439-amino-acid polypeptide reads, in one-letter code: Omega-aminotransferase (439 aa).

112–113 lines the pyridoxal 5'-phosphate pocket; the sequence is GS. At lysine 281 the chain carries N6-(pyridoxal phosphate)lysine. Threonine 318 is a pyridoxal 5'-phosphate binding site.

Belongs to the class-III pyridoxal-phosphate-dependent aminotransferase family. As to quaternary structure, homotetramer. Pyridoxal 5'-phosphate serves as cofactor.

It catalyses the reaction 3-oxopropanoate + L-alanine = beta-alanine + pyruvate. It carries out the reaction 3-aminobutanoate + pyruvate = acetoacetate + L-alanine. The catalysed reaction is benzylamine + pyruvate = benzaldehyde + L-alanine. The enzyme catalyses (S)-1-phenylethylamine + pyruvate = acetophenone + L-alanine. It catalyses the reaction 2-phenylethylamine + pyruvate = 2-phenylacetaldehyde + L-alanine. It carries out the reaction 1-phenylpropylamine + pyruvate = 1-phenylpropan-1-one + L-alanine. The catalysed reaction is 3-phenylpropylamine + pyruvate = 3-phenylpropanal + L-alanine. Its function is as follows. Aminotransferase that can use beta-amino acids, aliphatic amines, or aromatic amines as amino donors, and pyruvate as amino acceptor. Shows high activity for short-chain beta-amino acids, with the highest activity for 3-aminobutanoate and beta-alanine in vitro. Displays higher activity toward aromatic amines than aliphatic amines. May be involved in beta-alanine biosynthesis and/or degradation. The chain is Omega-aminotransferase from Caulobacter vibrioides (strain ATCC 19089 / CIP 103742 / CB 15) (Caulobacter crescentus).